Consider the following 407-residue polypeptide: GTPase Obg (407 aa).

Positions 1–159 constitute an Obg domain; sequence MKFVDEVSIR…RDLKLELKVL (159 aa). The interval 127–149 is disordered; it reads NTRFKSSTNRAPRQTTPGKPGDQ. Positions 129–143 are enriched in polar residues; it reads RFKSSTNRAPRQTTP. Positions 160-333 constitute an OBG-type G domain; sequence ADVGLLGLPN…LTRDIMRYLE (174 aa). GTP is bound by residues 166–173, 191–195, 213–216, 283–286, and 314–316; these read GLPNAGKS, FTTLV, DIPG, NKCD, and SAI. The Mg(2+) site is built by Ser173 and Thr193. The disordered stretch occupies residues 376-407; it reads SGVKSVHDIGDDDWDEEDVDDEDGPEIIYVRD. A compositionally biased stretch (acidic residues) spans 385-400; it reads GDDDWDEEDVDDEDGP.

Belongs to the TRAFAC class OBG-HflX-like GTPase superfamily. OBG GTPase family. Monomer. Requires Mg(2+) as cofactor.

It is found in the cytoplasm. Its function is as follows. An essential GTPase which binds GTP, GDP and possibly (p)ppGpp with moderate affinity, with high nucleotide exchange rates and a fairly low GTP hydrolysis rate. Plays a role in control of the cell cycle, stress response, ribosome biogenesis and in those bacteria that undergo differentiation, in morphogenesis control. The sequence is that of GTPase Obg from Pseudomonas savastanoi pv. phaseolicola (strain 1448A / Race 6) (Pseudomonas syringae pv. phaseolicola (strain 1448A / Race 6)).